Reading from the N-terminus, the 1257-residue chain is Liprin-alpha-2 (1257 aa).

Disordered regions lie at residues 1 to 29 (MMCEVMPTINEDTPMSQRGSQSSGSDSDS), 231 to 265 (ASSEGSTESEHLEGMEPGQKVHEKRLSNGSIDSTD), and 438 to 463 (EGQLEEKNQELQRARQREKMNEEHNK). Over residues 16 to 26 (SQRGSQSSGSD) the composition is skewed to low complexity. 3 coiled-coil regions span residues 29-154 (SHFE…SLRM), 185-541 (KALD…SLIE), and 643-695 (HSDA…GLNL). Residue S236 is modified to Phosphoserine. The residue at position 237 (T237) is a Phosphothreonine. The span at 238 to 256 (ESEHLEGMEPGQKVHEKRL) shows a compositional bias: basic and acidic residues. S239 carries the phosphoserine modification. Residues S687 and S689 each carry the phosphoserine modification. Low complexity-rich tracts occupy residues 709 to 725 (TASSLASSSPPSGHSTP) and 798 to 813 (SSLSVSLEPESLGLGS). 2 disordered regions span residues 709–738 (TASSLASSSPPSGHSTPKLTPRSPAREMDR) and 790–834 (SSYH…KSSI). S817 and S820 each carry phosphoserine. SAM domains lie at 898-964 (WDGP…MVSL), 1020-1084 (NHEW…LKRL), and 1108-1177 (WSND…LLAL). A coiled-coil region spans residues 1081 to 1107 (LKRLNYDRKELERRREASQHEIKDVLV).

The protein belongs to the liprin family. Liprin-alpha subfamily. Forms homodimers and heterodimers with liprins-alpha and liprins-beta. Interacts with the second PTPase domain of PTPRD, PTPRF and PTPRS. Interacts with KIF1A; the interaction decreases in presence of calcium. Expressed only in brain.

It is found in the cytoplasm. It localises to the cell surface. Its subcellular location is the cell projection. The protein localises to the dendritic spine. Functionally, alters PTPRF cellular localization and induces PTPRF clustering. May regulate the disassembly of focal adhesions. May localize receptor-like tyrosine phosphatases type 2A at specific sites on the plasma membrane, possibly regulating their interaction with the extracellular environment and their association with substrates. In neuronal cells, is a scaffolding protein in the dendritic spines which acts as immobile postsynaptic post able to recruit KIF1A-driven dense core vesicles to dendritic spines. This Homo sapiens (Human) protein is Liprin-alpha-2 (PPFIA2).